Consider the following 286-residue polypeptide: Beta-lactamase SHV-3 (286 aa).

Residues 1–21 form the signal peptide; sequence MRYIRLCIISLLATLPLAVHA. Serine 66 functions as the Acyl-ester intermediate in the catalytic mechanism. Cysteine 73 and cysteine 119 are disulfide-bonded. The active-site Proton acceptor is glutamate 164. 230–232 contributes to the substrate binding site; sequence KTG.

It belongs to the class-A beta-lactamase family.

It catalyses the reaction a beta-lactam + H2O = a substituted beta-amino acid. Functionally, this enzyme hydrolyzes cefotaxime, ceftazidime and other broad spectrum cephalosporins. This is Beta-lactamase SHV-3 (bla) from Klebsiella pneumoniae.